Reading from the N-terminus, the 242-residue chain is MNTEKPSVAHNVDHNEIAKFEAVASRWWDLEGEFKPLHRINPLRLGYITERSGGLFGKKVLDVGCGGGILAESMAREGATVTGLDMGFEPLQVAKLRALESGIEVEYVQETVEEHAAKHAQQYDVVTCMEMLEHVPDPQSVVHACAQLVKPDGEVFFSTLNRNGKSWLMAVVGAEYILRMVPKGTHDVKKFIKPAELLSWVDETVLKEQHITGLHYNPITNTFKLGPGVDVNYMLHTRAKKA.

S-adenosyl-L-methionine is bound by residues Arg44, Gly64, Asp85, and Met129.

This sequence belongs to the methyltransferase superfamily. UbiG/COQ3 family.

It carries out the reaction a 3-demethylubiquinol + S-adenosyl-L-methionine = a ubiquinol + S-adenosyl-L-homocysteine + H(+). The enzyme catalyses a 3-(all-trans-polyprenyl)benzene-1,2-diol + S-adenosyl-L-methionine = a 2-methoxy-6-(all-trans-polyprenyl)phenol + S-adenosyl-L-homocysteine + H(+). Its pathway is cofactor biosynthesis; ubiquinone biosynthesis. In terms of biological role, O-methyltransferase that catalyzes the 2 O-methylation steps in the ubiquinone biosynthetic pathway. The chain is Ubiquinone biosynthesis O-methyltransferase from Salmonella paratyphi A (strain ATCC 9150 / SARB42).